We begin with the raw amino-acid sequence, 156 residues long: Transcriptional repressor NrdR (156 aa).

Residues 3–34 (CPFCGNIDTQVKDSRPAEDHVSIRRRRFCPAC) fold into a zinc finger. Residues 49-139 (LVVIKTSGKR…VYKNFQAADD (91 aa)) form the ATP-cone domain.

It belongs to the NrdR family. It depends on Zn(2+) as a cofactor.

In terms of biological role, negatively regulates transcription of bacterial ribonucleotide reductase nrd genes and operons by binding to NrdR-boxes. In Ruegeria pomeroyi (strain ATCC 700808 / DSM 15171 / DSS-3) (Silicibacter pomeroyi), this protein is Transcriptional repressor NrdR.